Here is a 62-residue protein sequence, read N- to C-terminus: Large ribosomal subunit protein bL28 (62 aa).

This sequence belongs to the bacterial ribosomal protein bL28 family.

The polypeptide is Large ribosomal subunit protein bL28 (Parafrankia sp. (strain EAN1pec)).